We begin with the raw amino-acid sequence, 309 residues long: Prephenate dehydratase (309 aa).

The Prephenate dehydratase domain occupies 3–191 (GIAYLGPEGT…ARTRFVLVGC (189 aa)). Residues 205–282 (SVVLRLDNVP…ADVRYLGSWP (78 aa)) enclose the ACT domain.

Homodimer.

It carries out the reaction prephenate + H(+) = 3-phenylpyruvate + CO2 + H2O. Its pathway is amino-acid biosynthesis; L-phenylalanine biosynthesis; phenylpyruvate from prephenate: step 1/1. This is Prephenate dehydratase (pheA) from Mycolicibacterium gilvum (strain PYR-GCK) (Mycobacterium gilvum (strain PYR-GCK)).